We begin with the raw amino-acid sequence, 272 residues long: Transcription factor PU.1 (272 aa).

Positions 126-165 (SPAHQQSSDEEEGERQSPPLEVSDGEADGLEPGPGLLHGE) are disordered. 2 positions are modified to phosphoserine: Ser142 and Ser148. Over residues 155–165 (LEPGPGLLHGE) the composition is skewed to low complexity. The ETS DNA-binding region spans 172-255 (IRLYQFLLDL…VKKKLTYQFS (84 aa)). Lys219, Arg232, Arg235, and Lys245 together coordinate DNA.

The protein belongs to the ETS family. As to quaternary structure, binds DNA as a monomer. Can form homomers. Directly interacts with CEBPD/NF-IL6-beta; this interaction does not affect DNA-binding properties of each partner. Interacts with NONO/p54(nrb). Interacts with RUNX1/AML1. Interacts with GFI1; the interaction represses SPI1 transcriptional activity, hence blocks SPI1-induced macrophage differentiation of myeloid progenitor cells. Interacts with CEBPE. Interacts with IRF4/Pip and IRF8. Interacts with JUN. Interacts with RB1. Interacts with TBP. In terms of tissue distribution, expressed in spleen, thymus and bone-marrow macrophages.

It is found in the nucleus. With respect to regulation, transcriptional activity at macrophage-specific genes is inhibited by interaction with GFI1, which results in inhibition of SPI1-induced macrophage differentiation of myeloid progenitor cells, but not that of the granulocyte lineage. In terms of biological role, pioneer transcription factor, which controls hematopoietic cell fate by decompacting stem cell heterochromatin and allowing other transcription factors to enter otherwise inaccessible genomic sites. Once in open chromatin, can directly control gene expression by binding genetic regulatory elements and can also more broadly influence transcription by recruiting transcription factors, such as interferon regulatory factors (IRFs), to otherwise inaccessible genomic regions. Transcriptionally activates genes important for myeloid and lymphoid lineages, such as CSF1R. Transcriptional activation from certain promoters, possibly containing low affinity binding sites, is achieved cooperatively with other transcription factors. FCER1A transactivation is achieved in cooperation with GATA1. May be particularly important for the pro- to pre-B cell transition. Binds (via the ETS domain) onto the purine-rich DNA core sequence 5'-GAGGAA-3', also known as the PU-box. In vitro can bind RNA and interfere with pre-mRNA splicing. The sequence is that of Transcription factor PU.1 (Spi1) from Mus musculus (Mouse).